A 265-amino-acid chain; its full sequence is Glutamate racemase (265 aa).

Substrate contacts are provided by residues 12–13 and 44–45; these read DS and YG. Cys-75 functions as the Proton donor/acceptor in the catalytic mechanism. 76–77 contributes to the substrate binding site; that stretch reads NT. The active-site Proton donor/acceptor is the Cys-186. 187 to 188 serves as a coordination point for substrate; that stretch reads TH.

It belongs to the aspartate/glutamate racemases family.

The catalysed reaction is L-glutamate = D-glutamate. It functions in the pathway cell wall biogenesis; peptidoglycan biosynthesis. Functionally, provides the (R)-glutamate required for cell wall biosynthesis. The protein is Glutamate racemase of Pseudomonas aeruginosa (strain UCBPP-PA14).